A 180-amino-acid polypeptide reads, in one-letter code: tRNA (cytidine(56)-2'-O)-methyltransferase (180 aa).

Residues L85, 114 to 118 (GAEKV), and 132 to 139 (VGNQPHSE) each bind S-adenosyl-L-methionine.

It belongs to the aTrm56 family. Homodimer.

The protein resides in the cytoplasm. The enzyme catalyses cytidine(56) in tRNA + S-adenosyl-L-methionine = 2'-O-methylcytidine(56) in tRNA + S-adenosyl-L-homocysteine + H(+). Its function is as follows. Specifically catalyzes the AdoMet-dependent 2'-O-ribose methylation of cytidine at position 56 in tRNAs. This chain is tRNA (cytidine(56)-2'-O)-methyltransferase, found in Thermococcus kodakarensis (strain ATCC BAA-918 / JCM 12380 / KOD1) (Pyrococcus kodakaraensis (strain KOD1)).